The sequence spans 234 residues: Ribonuclease HII (234 aa).

Positions 30-221 (GPVAGVDEAG…VRNAAMGSSL (192 aa)) constitute an RNase H type-2 domain. Aspartate 36, glutamate 37, and aspartate 130 together coordinate a divalent metal cation.

This sequence belongs to the RNase HII family. Requires Mn(2+) as cofactor. Mg(2+) is required as a cofactor.

The protein localises to the cytoplasm. The enzyme catalyses Endonucleolytic cleavage to 5'-phosphomonoester.. Endonuclease that specifically degrades the RNA of RNA-DNA hybrids. The protein is Ribonuclease HII of Mycobacteroides abscessus (strain ATCC 19977 / DSM 44196 / CCUG 20993 / CIP 104536 / JCM 13569 / NCTC 13031 / TMC 1543 / L948) (Mycobacterium abscessus).